A 189-amino-acid polypeptide reads, in one-letter code: Penicillin-binding protein activator LpoB (189 aa).

Positions 1 to 16 (MRRILFVALSVMFLAG) are cleaved as a signal peptide. Cysteine 17 carries N-palmitoyl cysteine lipidation. The S-diacylglycerol cysteine moiety is linked to residue cysteine 17. The disordered stretch occupies residues 18–52 (PSLPPEQPEPPTPVVPVTPSEKPTPPSEKVPEPPK). A compositionally biased stretch (pro residues) spans 19–45 (SLPPEQPEPPTPVVPVTPSEKPTPPSE).

It belongs to the LpoB family. As to quaternary structure, interacts with PBP1b.

Its subcellular location is the cell outer membrane. In terms of biological role, regulator of peptidoglycan synthesis that is essential for the function of penicillin-binding protein 1B (PBP1b). In Photorhabdus laumondii subsp. laumondii (strain DSM 15139 / CIP 105565 / TT01) (Photorhabdus luminescens subsp. laumondii), this protein is Penicillin-binding protein activator LpoB.